The sequence spans 145 residues: Basic phospholipase A2 PC14 (145 aa).

The first 21 residues, 1 to 21 (MYPAHLLLLLAVCVSLLGASA), serve as a signal peptide directing secretion. Positions 22–27 (IPPLPL) are excised as a propeptide. Cystine bridges form between cysteine 38-cysteine 98, cysteine 54-cysteine 144, cysteine 56-cysteine 72, cysteine 71-cysteine 125, cysteine 78-cysteine 118, cysteine 87-cysteine 111, and cysteine 105-cysteine 116. 3 residues coordinate Ca(2+): tyrosine 55, glycine 57, and glycine 59. Histidine 75 is a catalytic residue. Aspartate 76 contacts Ca(2+). Aspartate 119 is a catalytic residue.

Belongs to the phospholipase A2 family. Group I subfamily. D49 sub-subfamily. Ca(2+) is required as a cofactor.

The protein localises to the secreted. The enzyme catalyses a 1,2-diacyl-sn-glycero-3-phosphocholine + H2O = a 1-acyl-sn-glycero-3-phosphocholine + a fatty acid + H(+). In terms of biological role, PLA2 catalyzes the calcium-dependent hydrolysis of the 2-acyl groups in 3-sn-phosphoglycerides. The chain is Basic phospholipase A2 PC14 from Laticauda laticaudata (Blue-ringed sea krait).